Here is a 620-residue protein sequence, read N- to C-terminus: 1-deoxy-D-xylulose-5-phosphate synthase (620 aa).

Thiamine diphosphate-binding positions include His-80 and 121–123 (GHS). Mg(2+) is bound at residue Asp-152. Thiamine diphosphate-binding positions include 153 to 154 (GA), Asn-181, Tyr-288, and Glu-370. Residue Asn-181 participates in Mg(2+) binding.

It belongs to the transketolase family. DXPS subfamily. As to quaternary structure, homodimer. Mg(2+) is required as a cofactor. Thiamine diphosphate serves as cofactor.

The enzyme catalyses D-glyceraldehyde 3-phosphate + pyruvate + H(+) = 1-deoxy-D-xylulose 5-phosphate + CO2. It participates in metabolic intermediate biosynthesis; 1-deoxy-D-xylulose 5-phosphate biosynthesis; 1-deoxy-D-xylulose 5-phosphate from D-glyceraldehyde 3-phosphate and pyruvate: step 1/1. Functionally, catalyzes the acyloin condensation reaction between C atoms 2 and 3 of pyruvate and glyceraldehyde 3-phosphate to yield 1-deoxy-D-xylulose-5-phosphate (DXP). The protein is 1-deoxy-D-xylulose-5-phosphate synthase of Cronobacter sakazakii (strain ATCC BAA-894) (Enterobacter sakazakii).